A 75-amino-acid polypeptide reads, in one-letter code: UPF0352 protein YejL (75 aa).

It belongs to the UPF0352 family.

The protein is UPF0352 protein YejL of Shigella dysenteriae serotype 1 (strain Sd197).